The sequence spans 423 residues: ATP-citrate synthase alpha chain protein 2 (423 aa).

Citrate-binding residues include Asn-343, Thr-345, and Arg-376.

It belongs to the succinate/malate CoA ligase beta subunit family. As to quaternary structure, heterooctamer of 4 alpha and 4 beta chains.

It localises to the cytoplasm. It is found in the cytosol. It carries out the reaction oxaloacetate + acetyl-CoA + ADP + phosphate = citrate + ATP + CoA. Its function is as follows. ATP citrate-lyase is the primary enzyme responsible for the synthesis of cytosolic acetyl-CoA, used for the elongation of fatty acids and biosynthesis of isoprenoids, flavonoids and malonated derivatives. May supply substrate to the cytosolic acetyl-CoA carboxylase, which generates the malonyl-CoA used for the synthesis of a multitude of compounds, including very long chain fatty acids and flavonoids. In contrast to all known animal ACL enzymes having a homomeric structure, plant ACLs are composed of alpha and beta chains. The polypeptide is ATP-citrate synthase alpha chain protein 2 (ACLA-2) (Oryza sativa subsp. japonica (Rice)).